The primary structure comprises 137 residues: MMQPKKTKFRKAHKGRIHGVASSGATLAFGQFGLKAMEPERVTARQIEAARRALTRHMKRAGRVWIRIFPDVPVSKKPAEVRMGSGKGAPELWVARVKPGRVMFEIDGVNQQTAKEALTLAAAKLPIKTRFVARIAE.

This sequence belongs to the universal ribosomal protein uL16 family. In terms of assembly, part of the 50S ribosomal subunit.

Binds 23S rRNA and is also seen to make contacts with the A and possibly P site tRNAs. This Rhodopseudomonas palustris (strain HaA2) protein is Large ribosomal subunit protein uL16.